Reading from the N-terminus, the 461-residue chain is uncharacterized protein (461 aa).

2 disordered regions span residues 254-273 (NNNN…NNNN) and 368-414 (QPSQ…NNNS). The span at 381–413 (NNNNNNNNNNNNNNNNNNNNNNNNNNNNNNNNN) shows a compositional bias: low complexity.

This is an uncharacterized protein from Dictyostelium discoideum (Social amoeba).